We begin with the raw amino-acid sequence, 518 residues long: MIPDVSQALAWLEKHPQALKGIQRGLERETLRVNADGTLATTGHPEALGSALTHKWITTDFAEALLEFITPVDGDIEHMLTFMRDLHRYTARNMGDERMWPLSMPCYIAEGQDIELAQYGTSNTGRFKTLYREGLKNRYGALMQTISGVHYNFSLPMAFWQAKCGDISGADAKEKISAGYFRVIRNYYRFGWVIPYLFGASPAICSSFLQGKPTSLPFEKTECGMYYLPYATSLRLSDLGYTNKSQSNLGITFNDLYEYVAGLKQAIKTPSEEYAKIGIEKDGKRLQINSNVLQIENELYAPIRPKRVTRSGESPSDALLRGGIEYIEVRSLDINPFSPIGVDEQQVRFLDLFMVWCALADAPEMSSSELACTRVNWNRVILEGRKPGLTLGIGCETAQFPLPQVGKDLFRDLKRVAQTLDSINGGEAYQKVCDELVACFDNPDLTFSARILRSMIDTGIGGTGKAFAEAYRNLLREEPLEILREEDFVAEREASERRQQEMEAADTEPFAVWLEKHA.

Belongs to the glutamate--cysteine ligase type 1 family. Type 1 subfamily.

The enzyme catalyses L-cysteine + L-glutamate + ATP = gamma-L-glutamyl-L-cysteine + ADP + phosphate + H(+). It participates in sulfur metabolism; glutathione biosynthesis; glutathione from L-cysteine and L-glutamate: step 1/2. The chain is Glutamate--cysteine ligase from Shigella dysenteriae serotype 1 (strain Sd197).